Consider the following 365-residue polypeptide: Bifunctional chorismate mutase/prephenate dehydratase (365 aa).

One can recognise a Chorismate mutase domain in the interval 1 to 96 (MADQDQLKAL…SCLALEQPLK (96 aa)). Residues Arg-11, Arg-28, Lys-39, and Glu-57 each coordinate substrate. Residues 97-272 (VAYLGPEGTF…NSTRFLIIGN (176 aa)) form the Prephenate dehydratase domain. In terms of domain architecture, ACT spans 284–361 (SIIVSMRNKP…VALKVLGSYP (78 aa)).

The protein localises to the cytoplasm. The enzyme catalyses chorismate = prephenate. It carries out the reaction prephenate + H(+) = 3-phenylpyruvate + CO2 + H2O. The protein operates within amino-acid biosynthesis; L-phenylalanine biosynthesis; phenylpyruvate from prephenate: step 1/1. It participates in metabolic intermediate biosynthesis; prephenate biosynthesis; prephenate from chorismate: step 1/1. Catalyzes the Claisen rearrangement of chorismate to prephenate and the decarboxylation/dehydration of prephenate to phenylpyruvate. This Pseudomonas aeruginosa (strain ATCC 15692 / DSM 22644 / CIP 104116 / JCM 14847 / LMG 12228 / 1C / PRS 101 / PAO1) protein is Bifunctional chorismate mutase/prephenate dehydratase (pheA).